A 333-amino-acid chain; its full sequence is Serine/threonine-protein phosphatase PP1-beta (333 aa).

Mn(2+) is bound by residues Asp63, His65, Asp91, and Asn123. Catalysis depends on His124, which acts as the Proton donor. His172 and His247 together coordinate Mn(2+). A disordered region spans residues 306–333 (GAGGVGSNRPVTPPRNAPAAQPKKGAKK). The span at 322 to 333 (APAAQPKKGAKK) shows a compositional bias: low complexity.

The protein belongs to the PPP phosphatase family. PP-1 subfamily. In terms of assembly, interacts with lab-1; the interaction is direct. Interacts with knl-1; the interaction is direct. The cofactor is Mn(2+).

It is found in the cytoplasm. Its subcellular location is the nucleus. The enzyme catalyses O-phospho-L-seryl-[protein] + H2O = L-seryl-[protein] + phosphate. The catalysed reaction is O-phospho-L-threonyl-[protein] + H2O = L-threonyl-[protein] + phosphate. In terms of biological role, serine/threonine-protein phosphatase essential for chromosomal dynamics during meiosis and mitosis. Antagonizes the function of air-2 in the regulation of chromosome cohesion. Dephosphorylates histone H3 at 'Ser-10'. Also involved in the activation of chloride channel clh-3 during cell swelling and meiotic maturation. Essential for embryogenesis. This chain is Serine/threonine-protein phosphatase PP1-beta (gsp-2), found in Caenorhabditis briggsae.